A 481-amino-acid chain; its full sequence is UDP-N-acetylmuramoyl-L-alanyl-D-glutamate--L-lysine ligase (481 aa).

A UDP-N-acetyl-alpha-D-muramoyl-L-alanyl-D-glutamate-binding site is contributed by Ser42. An ATP-binding site is contributed by 118–124 (GTKGKTT). UDP-N-acetyl-alpha-D-muramoyl-L-alanyl-D-glutamate contacts are provided by residues Gln158, 160 to 161 (TT), Ser187, and Arg195. N6-carboxylysine is present on Lys229. The L-lysine recognition motif signature appears at 404 to 407 (DDPN).

This sequence belongs to the MurCDEF family. MurE subfamily. Carboxylation is probably crucial for Mg(2+) binding and, consequently, for the gamma-phosphate positioning of ATP.

The protein resides in the cytoplasm. The catalysed reaction is UDP-N-acetyl-alpha-D-muramoyl-L-alanyl-D-glutamate + L-lysine + ATP = UDP-N-acetyl-alpha-D-muramoyl-L-alanyl-gamma-D-glutamyl-L-lysine + ADP + phosphate + H(+). It functions in the pathway cell wall biogenesis; peptidoglycan biosynthesis. Its function is as follows. Catalyzes the addition of L-lysine to the nucleotide precursor UDP-N-acetylmuramoyl-L-alanyl-D-glutamate (UMAG) in the biosynthesis of bacterial cell-wall peptidoglycan. The protein is UDP-N-acetylmuramoyl-L-alanyl-D-glutamate--L-lysine ligase of Streptococcus pyogenes serotype M18 (strain MGAS8232).